The chain runs to 357 residues: Uroporphyrinogen decarboxylase (357 aa).

Substrate-binding positions include 27–31, D77, Y154, S209, and H330; that span reads RQAGR.

Belongs to the uroporphyrinogen decarboxylase family. As to quaternary structure, homodimer.

The protein localises to the cytoplasm. It carries out the reaction uroporphyrinogen III + 4 H(+) = coproporphyrinogen III + 4 CO2. It functions in the pathway porphyrin-containing compound metabolism; protoporphyrin-IX biosynthesis; coproporphyrinogen-III from 5-aminolevulinate: step 4/4. Catalyzes the decarboxylation of four acetate groups of uroporphyrinogen-III to yield coproporphyrinogen-III. In Acinetobacter baumannii (strain SDF), this protein is Uroporphyrinogen decarboxylase.